The sequence spans 89 residues: Small ribosomal subunit protein uS15 (89 aa).

The protein belongs to the universal ribosomal protein uS15 family. In terms of assembly, part of the 30S ribosomal subunit. Forms a bridge to the 50S subunit in the 70S ribosome, contacting the 23S rRNA.

One of the primary rRNA binding proteins, it binds directly to 16S rRNA where it helps nucleate assembly of the platform of the 30S subunit by binding and bridging several RNA helices of the 16S rRNA. Its function is as follows. Forms an intersubunit bridge (bridge B4) with the 23S rRNA of the 50S subunit in the ribosome. This is Small ribosomal subunit protein uS15 from Phocaeicola vulgatus (strain ATCC 8482 / DSM 1447 / JCM 5826 / CCUG 4940 / NBRC 14291 / NCTC 11154) (Bacteroides vulgatus).